We begin with the raw amino-acid sequence, 292 residues long: Elongation factor Ts (292 aa).

Residues 79–82 are involved in Mg(2+) ion dislocation from EF-Tu; the sequence is TDFV.

The protein belongs to the EF-Ts family.

Its subcellular location is the cytoplasm. Associates with the EF-Tu.GDP complex and induces the exchange of GDP to GTP. It remains bound to the aminoacyl-tRNA.EF-Tu.GTP complex up to the GTP hydrolysis stage on the ribosome. This is Elongation factor Ts from Xanthomonas axonopodis pv. citri (strain 306).